A 205-amino-acid polypeptide reads, in one-letter code: Large ribosomal subunit protein uL4 (205 aa).

Residues 43–96 (GKRQGTSKVKNRSAVRGGGKKPWRQKGTGRARQGSIRSPQWRGGGTVFGPTPRS) form a disordered region. A compositionally biased stretch (basic residues) spans 51–71 (VKNRSAVRGGGKKPWRQKGTG).

Belongs to the universal ribosomal protein uL4 family. In terms of assembly, part of the 50S ribosomal subunit.

Its function is as follows. One of the primary rRNA binding proteins, this protein initially binds near the 5'-end of the 23S rRNA. It is important during the early stages of 50S assembly. It makes multiple contacts with different domains of the 23S rRNA in the assembled 50S subunit and ribosome. In terms of biological role, forms part of the polypeptide exit tunnel. This chain is Large ribosomal subunit protein uL4, found in Lactobacillus helveticus (strain DPC 4571).